The chain runs to 217 residues: Large ribosomal subunit protein uL3 (217 aa).

Residues 131-155 are disordered; that stretch reads FSSSRASHGNSRSHNVPGSIGMAQD. Residues 132–145 are compositionally biased toward low complexity; it reads SSSRASHGNSRSHN. Position 154 is an N5-methylglutamine (Gln-154).

Belongs to the universal ribosomal protein uL3 family. Part of the 50S ribosomal subunit. Forms a cluster with proteins L14 and L19. Post-translationally, methylated by PrmB.

Its function is as follows. One of the primary rRNA binding proteins, it binds directly near the 3'-end of the 23S rRNA, where it nucleates assembly of the 50S subunit. This Nitrosomonas eutropha (strain DSM 101675 / C91 / Nm57) protein is Large ribosomal subunit protein uL3.